We begin with the raw amino-acid sequence, 203 residues long: Pyridoxal 5'-phosphate synthase subunit PdxT (203 aa).

An L-glutamine-binding site is contributed by 51–53 (GES). C83 serves as the catalytic Nucleophile. L-glutamine is bound by residues R110 and 137 to 138 (IR). Catalysis depends on charge relay system residues H172 and E174.

This sequence belongs to the glutaminase PdxT/SNO family. As to quaternary structure, in the presence of PdxS, forms a dodecamer of heterodimers. Only shows activity in the heterodimer.

It catalyses the reaction aldehydo-D-ribose 5-phosphate + D-glyceraldehyde 3-phosphate + L-glutamine = pyridoxal 5'-phosphate + L-glutamate + phosphate + 3 H2O + H(+). The catalysed reaction is L-glutamine + H2O = L-glutamate + NH4(+). It functions in the pathway cofactor biosynthesis; pyridoxal 5'-phosphate biosynthesis. In terms of biological role, catalyzes the hydrolysis of glutamine to glutamate and ammonia as part of the biosynthesis of pyridoxal 5'-phosphate. The resulting ammonia molecule is channeled to the active site of PdxS. The sequence is that of Pyridoxal 5'-phosphate synthase subunit PdxT from Thermoplasma acidophilum (strain ATCC 25905 / DSM 1728 / JCM 9062 / NBRC 15155 / AMRC-C165).